Consider the following 171-residue polypeptide: AN1-type zinc finger protein 2A (171 aa).

2 consecutive AN1-type zinc fingers follow at residues 4–52 (PDLG…KKDV) and 94–142 (KVFT…SSVS). Zn(2+)-binding residues include C10, C15, C25, C28, C33, H36, H42, C44, C100, C105, C115, C118, C123, H126, H132, and C134. Residues 135 to 171 (QAGSSSVSRGRSSASRAAEQKPSGVSWLAQRLRRTVK) are disordered. Low complexity predominate over residues 136-151 (AGSSSVSRGRSSASRA).

It localises to the cytoplasm. Its subcellular location is the nucleus. The chain is AN1-type zinc finger protein 2A (Zfand2a) from Rattus norvegicus (Rat).